Reading from the N-terminus, the 959-residue chain is Isoleucine--tRNA ligase (959 aa).

The 'HIGH' region signature appears at 60-70 (PYANGSLHMGH). Glu569 is a binding site for L-isoleucyl-5'-AMP. Residues 610–614 (KMSKS) carry the 'KMSKS' region motif. Lys613 is a binding site for ATP. Zn(2+) contacts are provided by Cys928, Cys931, Cys948, and Cys951.

This sequence belongs to the class-I aminoacyl-tRNA synthetase family. IleS type 1 subfamily. In terms of assembly, monomer. It depends on Zn(2+) as a cofactor.

Its subcellular location is the cytoplasm. The enzyme catalyses tRNA(Ile) + L-isoleucine + ATP = L-isoleucyl-tRNA(Ile) + AMP + diphosphate. Its function is as follows. Catalyzes the attachment of isoleucine to tRNA(Ile). As IleRS can inadvertently accommodate and process structurally similar amino acids such as valine, to avoid such errors it has two additional distinct tRNA(Ile)-dependent editing activities. One activity is designated as 'pretransfer' editing and involves the hydrolysis of activated Val-AMP. The other activity is designated 'posttransfer' editing and involves deacylation of mischarged Val-tRNA(Ile). The chain is Isoleucine--tRNA ligase from Rippkaea orientalis (strain PCC 8801 / RF-1) (Cyanothece sp. (strain PCC 8801)).